The primary structure comprises 148 residues: uncharacterized protein (148 aa).

Helical transmembrane passes span 20 to 42 (YYSK…IANY), 52 to 74 (YFLM…VRCY), and 118 to 135 (IIRY…CTYI).

Its subcellular location is the cell membrane. This is an uncharacterized protein from Rickettsia prowazekii (strain Madrid E).